The following is a 100-amino-acid chain: Tuberoinfundibular peptide of 39 residues (100 aa).

The N-terminal stretch at 1–30 (METCQMSRSPRERLLLLLLLLLLVPWGTGP) is a signal peptide. A propeptide spanning residues 31–59 (ASGVALPLAGVFSLRAPGRAWAGLGSPLS) is cleaved from the precursor.

Belongs to the parathyroid hormone family. Ligand of high affinity for the PTH2 receptor (PTH2R). Expressed in testis and, less abundantly, in liver and kidney. Expressed in seminiferous tubuli and several brain regions, including nucleus ruber, caudal paralemniscal nucleus, nucleus centralis pontis, and nucleus subparafascicularis thalami. Expressed in neurons of cerebral cortex and subcortical areas. Expressed in Purkinje cells of cerebellum.

The protein resides in the secreted. Its function is as follows. Plays a role as a potent and selective agonist of PTH2R resulting in adenyl cyclase activation and intracellular calcium levels elevation. Induces protein kinase C beta activation, recruitment of beta-arrestin and PTH2R internalization. May inhibit cell proliferation via its action of PTH2R activation. Neuropeptide which may also have a role in spermatogenesis. May activate nociceptors and nociceptive circuits. The protein is Tuberoinfundibular peptide of 39 residues (Pth2) of Mus musculus (Mouse).